A 55-amino-acid polypeptide reads, in one-letter code: Large ribosomal subunit protein bL33m (55 aa).

This sequence belongs to the bacterial ribosomal protein bL33 family. In terms of assembly, component of the mitochondrial large ribosomal subunit (mt-LSU). Mature yeast 74S mitochondrial ribosomes consist of a small (37S) and a large (54S) subunit. The 37S small subunit contains a 15S ribosomal RNA (15S mt-rRNA) and at least 32 different proteins. The 54S large subunit contains a 21S rRNA (21S mt-rRNA) and at least 45 different proteins. bL33m stabilizes the tRNA acceptor stem in the E-site.

It localises to the mitochondrion. Component of the mitochondrial ribosome (mitoribosome), a dedicated translation machinery responsible for the synthesis of mitochondrial genome-encoded proteins, including at least some of the essential transmembrane subunits of the mitochondrial respiratory chain. The mitoribosomes are attached to the mitochondrial inner membrane and translation products are cotranslationally integrated into the membrane. This is Large ribosomal subunit protein bL33m (mrpl39) from Schizosaccharomyces pombe (strain 972 / ATCC 24843) (Fission yeast).